A 354-amino-acid polypeptide reads, in one-letter code: Phosphoribosylformylglycinamidine cyclo-ligase (354 aa).

The protein belongs to the AIR synthase family.

The protein localises to the cytoplasm. It carries out the reaction 2-formamido-N(1)-(5-O-phospho-beta-D-ribosyl)acetamidine + ATP = 5-amino-1-(5-phospho-beta-D-ribosyl)imidazole + ADP + phosphate + H(+). Its pathway is purine metabolism; IMP biosynthesis via de novo pathway; 5-amino-1-(5-phospho-D-ribosyl)imidazole from N(2)-formyl-N(1)-(5-phospho-D-ribosyl)glycinamide: step 2/2. This is Phosphoribosylformylglycinamidine cyclo-ligase from Synechococcus sp. (strain JA-2-3B'a(2-13)) (Cyanobacteria bacterium Yellowstone B-Prime).